A 169-amino-acid chain; its full sequence is Protein HIGH ARSENIC CONTENT 1, mitochondrial (169 aa).

A mitochondrion-targeting transit peptide spans 1–59; the sequence is MYTYSLLNLSHCRRQTRKKRKTDHTEGFLMEETKPKTVEDVETVDVYTAKGFLSTGHRY. Residues 60-153 enclose the Rhodanese domain; it reads LDVRTNEEFA…WVDAGFAGDK (94 aa). The active-site Cysteine persulfide intermediate is the C113.

In terms of tissue distribution, expressed in root hairs, epidermal cells at the surface of the root and in the pericycle within the stele.

Its subcellular location is the mitochondrion. The catalysed reaction is [glutaredoxin]-dithiol + arsenate + glutathione + H(+) = glutathionyl-S-S-[glutaredoxin] + arsenite + H2O. Its activity is regulated as follows. Inhibited by trobenzenesulphonic acid (TNBS). Functionally, arsenate reductase critical for arsenic tolerance. Reduces arsenate to arsenite in the root, facilitating efflux of arsenic back into the soil to limit both its accumulation in the root and transport to the shoot. Essential for arsenite efflux from the root, but not necessary for arsenate uptake. This chain is Protein HIGH ARSENIC CONTENT 1, mitochondrial, found in Arabidopsis thaliana (Mouse-ear cress).